The following is a 70-amino-acid chain: UPF0270 protein VIBHAR_00073 (70 aa).

It belongs to the UPF0270 family.

The sequence is that of UPF0270 protein VIBHAR_00073 from Vibrio campbellii (strain ATCC BAA-1116).